The following is a 412-amino-acid chain: F-box/WD repeat-containing protein 4 (412 aa).

Residues 25 to 71 (GPALWRLPEELLLLICSYLDMRALGRLAQVCRWLRRFTSCDLLWRRI) enclose the F-box domain. 6 WD repeats span residues 154-190 (RPLGVFAGHDEDVCHFVLANSHIVSAGGDGKIGIHKI), 193-229 (TFTVKYSAHEQEVNCVDCKGGIIVSGSRDRTAKVWPL), 236-277 (QCLH…IWDL), 283-321 (MTHLGSDFPPGAGVLDVMYESPFTLLSCGYDTYVRYWDL), 327-366 (KCVMEWEEPHDSTLYCLQTDGNHLLATGSSYYGVVRLWDR), and 373-409 (HAFPLTSTPLSSPVYCLRLTTKHLYAALSYNLHVLDF).

In terms of assembly, part of a SCF (SKP1-cullin-F-box) protein ligase complex. Interacts with POUF51. Expressed in brain, kidney, lung and liver.

Its function is as follows. Probably recognizes and binds to some phosphorylated proteins and promotes their ubiquitination and degradation. Likely to be involved in key signaling pathways crucial for normal limb development. May participate in Wnt signaling. The sequence is that of F-box/WD repeat-containing protein 4 (FBXW4) from Homo sapiens (Human).